The chain runs to 278 residues: HTH-type transcriptional activator RhaS (278 aa).

The 99-residue stretch at 174 to 272 folds into the HTH araC/xylS-type domain; the sequence is NLLLAWLEDH…NWSPRDIRQG (99 aa). 2 DNA-binding regions (H-T-H motif) span residues 191–212 and 239–262; these read DAVA…KQQT and VTDI…RREF.

As to quaternary structure, binds DNA as a dimer.

Its subcellular location is the cytoplasm. Functionally, activates expression of the rhaBAD and rhaT operons. This Escherichia coli (strain SMS-3-5 / SECEC) protein is HTH-type transcriptional activator RhaS.